We begin with the raw amino-acid sequence, 667 residues long: Leucine aminopeptidase 2 (667 aa).

A peptide is bound by residues 188-190 and 318-323; these read QCQ and PYGGME. His-347 contacts Zn(2+). Catalysis depends on Glu-348, which acts as the Proton acceptor. Zn(2+) is bound by residues His-351 and Glu-370. Tyr-436 (proton donor) is an active-site residue.

It belongs to the peptidase M1 family. Zn(2+) is required as a cofactor.

It is found in the cytoplasm. Its subcellular location is the nucleus. The catalysed reaction is an epoxide + H2O = an ethanediol. Aminopeptidase that preferentially cleaves di- and tripeptides. Also has low epoxide hydrolase activity (in vitro). Can hydrolyze the epoxide leukotriene LTA(4) but it forms preferentially 5,6-dihydroxy-7,9,11,14-eicosatetraenoic acid rather than the cytokine leukotriene B(4) as the product compared to the homologous mammalian enzyme (in vitro). This Neurospora crassa (strain ATCC 24698 / 74-OR23-1A / CBS 708.71 / DSM 1257 / FGSC 987) protein is Leucine aminopeptidase 2 (ara-1).